Here is a 499-residue protein sequence, read N- to C-terminus: Taxadiene 5-alpha hydroxylase (499 aa).

A helical; Signal-anchor transmembrane segment spans residues threonine 22–phenylalanine 42. Cysteine 445 lines the heme pocket.

Belongs to the cytochrome P450 family. Heme is required as a cofactor.

The protein localises to the membrane. It carries out the reaction taxa-4(5),11(12)-diene + reduced [NADPH--hemoprotein reductase] + O2 = taxa-4(20),11-dien-5alpha-ol + oxidized [NADPH--hemoprotein reductase] + H2O + H(+). Its pathway is alkaloid biosynthesis; taxol biosynthesis; taxa-4(20),11-dien-5alpha-ol from geranylgeranyl diphosphate: step 2/2. In terms of biological role, catalyzes the first oxygenation step of taxol biosynthesis. Can use both taxa-4(5),11(12)-diene and taxa-4(20),11(12)-diene as substrate. The chain is Taxadiene 5-alpha hydroxylase from Taxus cuspidata (Japanese yew).